The primary structure comprises 496 residues: Maturase K (496 aa).

Belongs to the intron maturase 2 family. MatK subfamily.

The protein resides in the plastid. Its subcellular location is the chloroplast. Functionally, usually encoded in the trnK tRNA gene intron. Probably assists in splicing its own and other chloroplast group II introns. This Paeonia suffruticosa (Tree peony) protein is Maturase K.